The primary structure comprises 674 residues: Sodium/myo-inositol cotransporter 2 (674 aa).

The Extracellular portion of the chain corresponds to 1-27 (MESSTSSPQPPLSDPLDPFPQRSLEPG). A helical membrane pass occupies residues 28-48 (DIAVLVLYFLFVLAVGLWSTV). Residues 49 to 56 (KTKRDTVK) lie on the Cytoplasmic side of the membrane. A helical membrane pass occupies residues 57–77 (GYFLAGGDMVWWPVGASLFAS). The Extracellular portion of the chain corresponds to 78–102 (NVGSGHFVGLAGSGAATGISVAAYE). Residues 103–123 (FNGMFSVLMLAWIFLPIYIAG) traverse the membrane as a helical segment. Residues 124 to 140 (QVTTMPEYLRRRFGGSR) lie on the Cytoplasmic side of the membrane. The chain crosses the membrane as a helical span at residues 141–161 (IAITLAVLYLFIYIFTKISVD). The Extracellular portion of the chain corresponds to 162–180 (MYAGAIFIQQSLHLDLYLS). A helical membrane pass occupies residues 181–201 (VVGLLAVTALYTVAGGLAAVI). The Cytoplasmic segment spans residues 202–208 (YTDALQT). The chain crosses the membrane as a helical span at residues 209-229 (LIMLVGALTLMGYSFAAVGGM). At 230 to 272 (EGLQEKYFLALPSNRSENSSCGLPREDAFHLFRDPLTSDLPWP) the chain is on the extracellular side. Residues 273 to 293 (GILFGMSIPSLWYWCTDQVIV) traverse the membrane as a helical segment. At 294–308 (QRSLAAKNLSHAKGG) the chain is on the cytoplasmic side. A helical transmembrane segment spans residues 309 to 329 (SLMAAYLKVLPLFIMVFPGMV). Over 330-375 (SRILFPDQVACADPETCQRVCNNPSGCSDIAYPKLVLELLPTGLRG) the chain is Extracellular. Residues 376–396 (LMMAVMVAALMSSLTSIFNSA) traverse the membrane as a helical segment. Residues 397–418 (STIFTMDLWNHVRPRASEKELM) lie on the Cytoplasmic side of the membrane. The chain crosses the membrane as a helical span at residues 419–439 (IVGRVFVLLLVLVSVLWIPVV). Residues 440-446 (QASQGGQ) lie on the Extracellular side of the membrane. The chain crosses the membrane as a helical span at residues 447–467 (LFVYIQAISSYLQPPVAMVFV). Over 468–479 (LGCFWKRANEKG) the chain is Cytoplasmic. The chain crosses the membrane as a helical span at residues 480-500 (AFWGLVLGLLLGFIRLILDFI). At 501–521 (YVEPACHQPDERPSVVKNVHY) the chain is on the extracellular side. The helical transmembrane segment at 522 to 542 (LYFSMILSSVTVLTVTVMSLL) threads the bilayer. Over 543-653 (TEPPSKEMIS…SIEENPVVKT (111 aa)) the chain is Cytoplasmic. Residues 654 to 674 (LLDVNCLLCICCAFFLWGYFA) form a helical membrane-spanning segment.

The protein belongs to the sodium:solute symporter (SSF) (TC 2.A.21) family. In terms of tissue distribution, expressed in brain, lung and kidney. In the kidney, strongly expressed in the cortex, at the luminal side of proximal convoluted tubules and in BBMVs. Weaker expression observed in the medulla (at protein level).

Its subcellular location is the membrane. It is found in the apical cell membrane. It catalyses the reaction myo-inositol(out) + 2 Na(+)(out) = myo-inositol(in) + 2 Na(+)(in). The catalysed reaction is 1D-chiro-inositol(out) + 2 Na(+)(out) = 1D-chiro-inositol(in) + 2 Na(+)(in). The enzyme catalyses D-glucose(out) + 2 Na(+)(out) = D-glucose(in) + 2 Na(+)(in). It carries out the reaction D-xylose(out) + 2 Na(+)(out) = D-xylose(in) + 2 Na(+)(in). MI transport activity stimulated five-fold under 24 hour hypertonic shock conditions. MI inward currents were gradually inhibited as increasing amounts of phlorizin were added to the superfusion medium. When sodium is replaced by potassium, MI uptake is dramatically reduced and in the presence of L-fucose or D-chiro-inositol (DCI), the specific accumulation of tracer amounts of MI is also reduced. Functionally, involved in the sodium-dependent cotransport of myo-inositol (MI) with a Na(+):MI stoichiometry of 2:1. Exclusively responsible for apical MI transport and absorption in intestine. Can also transport D-chiro-inositol (DCI) but not L-fucose. Exhibits stereospecific cotransport of both D-glucose and D-xylose. May induce apoptosis through the TNF-alpha, PDCD1 pathway. May play a role in the regulation of MI concentration in serum, involving reabsorption in at least the proximal tubule of the kidney. The sequence is that of Sodium/myo-inositol cotransporter 2 from Oryctolagus cuniculus (Rabbit).